The sequence spans 25 residues: Caerin-1.6 (25 aa).

The residue at position 25 (Leu-25) is a Leucine amide.

It belongs to the frog skin active peptide (FSAP) family. Caerin subfamily. Expressed by the skin dorsal glands.

The protein localises to the secreted. In terms of biological role, antimicrobial peptide. Adopts an alpha helical conformation which can disrupt bacterial membranes. Strongly inhibits the formation of NO by neuronal nitric oxide synthase (nNOS) at micromolar concentrations. Acts by a non-competitive mechanism, probably by binding to calcium/calmodulin and as a consequence blocking calmodulin attachment to nNOS. Does not show antimicrobial activity. The polypeptide is Caerin-1.6 (Ranoidea chloris (Red-eyed tree frog)).